We begin with the raw amino-acid sequence, 46 residues long: Antimicrobial peptide eNAP-1 (46 aa).

Intrachain disulfides connect Cys-4–Cys-16 and Cys-10–Cys-26.

This sequence belongs to the granulin family.

The protein resides in the secreted. Has antimicrobial activity against Gram-negative and Gram-positive bacteria. The sequence is that of Antimicrobial peptide eNAP-1 from Equus caballus (Horse).